The sequence spans 316 residues: Ribosomal RNA small subunit methyltransferase H (316 aa).

Residues 35-37, aspartate 55, phenylalanine 80, aspartate 102, and glutamine 109 each bind S-adenosyl-L-methionine; that span reads GGH.

This sequence belongs to the methyltransferase superfamily. RsmH family.

It is found in the cytoplasm. The catalysed reaction is cytidine(1402) in 16S rRNA + S-adenosyl-L-methionine = N(4)-methylcytidine(1402) in 16S rRNA + S-adenosyl-L-homocysteine + H(+). In terms of biological role, specifically methylates the N4 position of cytidine in position 1402 (C1402) of 16S rRNA. The sequence is that of Ribosomal RNA small subunit methyltransferase H from Colwellia psychrerythraea (strain 34H / ATCC BAA-681) (Vibrio psychroerythus).